A 400-amino-acid chain; its full sequence is MGTELFNQAKPILEKIEQHGFEAYFVGGSVRDYLMNRHIHDIDITTSATPDEIESIFEKTIPIGREHGTINVVYQGTNYEVTTFRAEAEYVDHRRPSEVYFVRDLKEDLQRRDFTINAIAMDKNFNIYDYFEGDVALNQHIIKTVGDAKERFKEDALRILRGLRFQSQLNFTIEGDTFEAMKHQIADVEHLSIERIVVELKKLIKGQNVSQSYLNLIDLNFFNYVPFFRSLDMKQTKVNSPISFELWIAILLTVEQTNTSLSDLKISNNEKTKINQYHKIMIEMPQVSSKEQLKLFVYDYGMNNIIDIIAINSILEDNNIKIASPLIFNLQSIKEIDQHLPIRSRRELNINGGDILRITSKKSGPWLKEVLRQIEIDVLTNKVPNLKDELLKWVKENVKI.

Residues Gly-28 and Arg-31 each contribute to the ATP site. The CTP site is built by Gly-28 and Arg-31. Asp-41 and Asp-43 together coordinate Mg(2+). Residues Arg-112, Asp-155, Arg-158, Arg-161, and Arg-164 each coordinate ATP. Positions 112, 155, 158, 161, and 164 each coordinate CTP.

Belongs to the tRNA nucleotidyltransferase/poly(A) polymerase family. Bacterial CCA-adding enzyme type 3 subfamily. In terms of assembly, homodimer. Mg(2+) serves as cofactor.

It carries out the reaction a tRNA precursor + 2 CTP + ATP = a tRNA with a 3' CCA end + 3 diphosphate. The enzyme catalyses a tRNA with a 3' CCA end + 2 CTP + ATP = a tRNA with a 3' CCACCA end + 3 diphosphate. Its function is as follows. Catalyzes the addition and repair of the essential 3'-terminal CCA sequence in tRNAs without using a nucleic acid template. Adds these three nucleotides in the order of C, C, and A to the tRNA nucleotide-73, using CTP and ATP as substrates and producing inorganic pyrophosphate. tRNA 3'-terminal CCA addition is required both for tRNA processing and repair. Also involved in tRNA surveillance by mediating tandem CCA addition to generate a CCACCA at the 3' terminus of unstable tRNAs. While stable tRNAs receive only 3'-terminal CCA, unstable tRNAs are marked with CCACCA and rapidly degraded. In Staphylococcus haemolyticus (strain JCSC1435), this protein is CCA-adding enzyme.